The sequence spans 438 residues: Ribosomal protein uS12 methylthiotransferase RimO (438 aa).

The MTTase N-terminal domain occupies 6-118 (KQLCLISLGC…IDILIAKKQN (113 aa)). Residues Cys-15, Cys-49, Cys-81, Cys-150, Cys-154, and Cys-157 each contribute to the [4Fe-4S] cluster site. The region spanning 136–364 (TGSSVHAYVK…NKIALKHQHN (229 aa)) is the Radical SAM core domain.

Belongs to the methylthiotransferase family. RimO subfamily. Requires [4Fe-4S] cluster as cofactor.

The protein localises to the cytoplasm. It carries out the reaction L-aspartate(89)-[ribosomal protein uS12]-hydrogen + (sulfur carrier)-SH + AH2 + 2 S-adenosyl-L-methionine = 3-methylsulfanyl-L-aspartate(89)-[ribosomal protein uS12]-hydrogen + (sulfur carrier)-H + 5'-deoxyadenosine + L-methionine + A + S-adenosyl-L-homocysteine + 2 H(+). In terms of biological role, catalyzes the methylthiolation of an aspartic acid residue of ribosomal protein uS12. The sequence is that of Ribosomal protein uS12 methylthiotransferase RimO from Helicobacter acinonychis (strain Sheeba).